The sequence spans 676 residues: Ribonuclease R (676 aa).

The RNB domain occupies 207–527 (RKDLRDLLCF…LIVHRLLFNP (321 aa)). The 86-residue stretch at 566–651 (NKFLQEQPKT…LTQKIVWSIA (86 aa)) folds into the S1 motif domain. The segment at 656 to 676 (DKPKKIKKTPSKKKGTKKRAS) is disordered. Residues 659-676 (KKIKKTPSKKKGTKKRAS) show a composition bias toward basic residues.

It belongs to the RNR ribonuclease family. RNase R subfamily.

Its subcellular location is the cytoplasm. It catalyses the reaction Exonucleolytic cleavage in the 3'- to 5'-direction to yield nucleoside 5'-phosphates.. Functionally, 3'-5' exoribonuclease that releases 5'-nucleoside monophosphates and is involved in maturation of structured RNAs. This is Ribonuclease R from Chlamydia pneumoniae (Chlamydophila pneumoniae).